We begin with the raw amino-acid sequence, 435 residues long: MLRNTVKRLMTYTFKPSKQTSSFGPSVWLEFSPLAIKYNAVNLGQGFPNFEPPKFVKDAMIKTIEVGGFNQYTRSPGHIRLVKALSSVYSPYFGRELNAMTEIMVGVGASESLFAAISSIVNEGDEVILIEPFFDIYIGPILMAGGIPKFVTLKEEESSQAGSSDKKRSSKHWKINKEELAAAFTDKTKLIILNNPHNPVGKVYSKEELQEIADVVAKHGPNTTVISDEVYEWMTFDGEEHHRFATLPGMWERTITIGSAGKTFSITGWKVGWCIGPSNIIGAIANTHQYVPFSVPTPTQEAVAIALEQPNIKDYFKELATMYQNKRDTLLNSLTQAGLDPVIPQGTYFIMGDTSSIHLQGDQGKDTSITGMGLHLRDWNIARYLTTEYGVTTIPPSAFYCDDHQKIPENFVRFTFCKDDLTLQKAHDNLLKLKK.

Residues Gly46 and Asn198 each coordinate substrate. An N6-(pyridoxal phosphate)lysine modification is found at Lys262. Residue Arg413 coordinates substrate.

The protein belongs to the class-I pyridoxal-phosphate-dependent aminotransferase family. In terms of assembly, homodimer. The cofactor is pyridoxal 5'-phosphate.

Its subcellular location is the cytoplasm. It catalyses the reaction L-kynurenine + 2-oxoglutarate = kynurenate + L-glutamate + H2O. The catalysed reaction is 3-phenylpyruvate + L-glutamine = 2-oxoglutaramate + L-phenylalanine. It carries out the reaction an S-substituted L-cysteine + H2O = a thiol + pyruvate + NH4(+). It functions in the pathway amino-acid degradation; L-kynurenine degradation; kynurenate from L-kynurenine: step 1/2. In terms of biological role, catalyzes the irreversible transamination of the L-tryptophan metabolite L-kynurenine to form kynurenic acid (KA). Metabolizes the cysteine conjugates of certain halogenated alkenes and alkanes to form reactive metabolites. Catalyzes the beta-elimination of S-conjugates and Se-conjugates of L-(seleno)cysteine, resulting in the cleavage of the C-S or C-Se bond. The protein is Kynurenine--oxoglutarate transaminase (ccbl) of Dictyostelium discoideum (Social amoeba).